The following is a 102-amino-acid chain: MKKVLALVVAAAMGLSSAAFAAETATTPAPTATTTKAAPAKTTHHKKQHKAAPAQKAQAAKKHHKNTKAEQKAPEQKAQAAKKHAKKHSHQQPAKPAAQPAA.

The N-terminal stretch at M1–A21 is a signal peptide. The span at A22–K41 shows a compositional bias: low complexity. The propeptide occupies A22–Q58. The interval A22 to A102 is disordered. Basic residues predominate over residues A80–H90. The span at Q91–A102 shows a compositional bias: low complexity.

This sequence belongs to the Asr family. Proteolytic processing gives rise to the active protein.

The protein resides in the periplasm. Functionally, required for growth and/or survival at acidic conditions. This chain is Acid shock protein (asr), found in Escherichia coli O157:H7.